Here is a 309-residue protein sequence, read N- to C-terminus: Homoserine O-succinyltransferase (309 aa).

The Acyl-thioester intermediate role is filled by cysteine 142. Residues lysine 163 and serine 192 each contribute to the substrate site. The active-site Proton acceptor is histidine 235. Glutamate 237 is a catalytic residue. Arginine 249 contributes to the substrate binding site.

The protein belongs to the MetA family.

It localises to the cytoplasm. The enzyme catalyses L-homoserine + succinyl-CoA = O-succinyl-L-homoserine + CoA. It functions in the pathway amino-acid biosynthesis; L-methionine biosynthesis via de novo pathway; O-succinyl-L-homoserine from L-homoserine: step 1/1. In terms of biological role, transfers a succinyl group from succinyl-CoA to L-homoserine, forming succinyl-L-homoserine. The chain is Homoserine O-succinyltransferase from Proteus mirabilis (strain HI4320).